Here is a 455-residue protein sequence, read N- to C-terminus: Venom prothrombin activator nigrarin-D (455 aa).

A signal peptide spans 1 to 20 (MAPPLLLCLILTFLWNLPEA). The propeptide occupies 21–40 (ESNVFLKSKVANRFLQRTKR). The region spanning 41 to 86 (SNSIFEEFKAGNIERECIEEKCSKEEAREVFEDNEKTETFWNVYVD) is the Gla domain. 11 positions are modified to 4-carboxyglutamate: glutamate 46, glutamate 47, glutamate 54, glutamate 56, glutamate 59, glutamate 60, glutamate 65, glutamate 66, glutamate 69, glutamate 72, and glutamate 75. Cysteine 57 and cysteine 62 are joined by a disulfide. An EGF-like 1; calcium-binding domain is found at 86–122 (DGDQCSSNPCHYRGTCKDGIGSYTCTCLPNYEGKNCE). Disulfide bonds link cysteine 90–cysteine 101, cysteine 95–cysteine 110, cysteine 112–cysteine 121, cysteine 129–cysteine 140, cysteine 136–cysteine 149, cysteine 151–cysteine 164, cysteine 172–cysteine 328, cysteine 216–cysteine 221, cysteine 236–cysteine 252, cysteine 376–cysteine 390, and cysteine 401–cysteine 429. Residue serine 92 is glycosylated (O-linked (Hex...) serine). One can recognise an EGF-like 2 domain in the interval 129-164 (CRVFNGNCWHFCKSVQNEIQCSCAESYRLGDDGHSC). A propeptide spans 182-209 (REASLPDFVQSQKAILLKKSDNPSPDIR) (activation peptide). In terms of domain architecture, Peptidase S1 spans 210-453 (IINGMDCKLG…FIPWIKAIMS (244 aa)). Histidine 251 serves as the catalytic Charge relay system. Asparagine 254 carries an N-linked (GlcNAc...) asparagine glycan. Aspartate 308 serves as the catalytic Charge relay system. The active-site Charge relay system is serine 405.

It belongs to the peptidase S1 family. Snake venom subfamily. Heterodimer of a light chain and a heavy chain; disulfide-linked. The vitamin K-dependent, enzymatic carboxylation of some glutamate residues allows the modified protein to bind calcium. In terms of tissue distribution, expressed by the venom gland.

The protein localises to the secreted. It catalyses the reaction Selective cleavage of Arg-|-Thr and then Arg-|-Ile bonds in prothrombin to form thrombin.. Functionally, snake prothrombin activator that attacks the hemostatic system of prey. This protein is functionally similar to blood coagulation factor Xa. The chain is Venom prothrombin activator nigrarin-D from Cryptophis nigrescens (Eastern small-eyed snake).